Consider the following 170-residue polypeptide: Large ribosomal subunit protein uL15 (170 aa).

Residues 1-12 (MKLHDLRPAEGS) show a composition bias toward basic and acidic residues. Residues 1 to 50 (MKLHDLRPAEGSHRKRKRIGRGHGSGKVKTGGKGMMGQKARSGPGPYRTF) are disordered. Positions 13-26 (HRKRKRIGRGHGSG) are enriched in basic residues.

Belongs to the universal ribosomal protein uL15 family. Part of the 50S ribosomal subunit.

Its function is as follows. Binds to the 23S rRNA. The chain is Large ribosomal subunit protein uL15 from Chloroflexus aggregans (strain MD-66 / DSM 9485).